The chain runs to 186 residues: Probable RNA 2'-phosphotransferase (186 aa).

Belongs to the KptA/TPT1 family.

Its function is as follows. Removes the 2'-phosphate from RNA via an intermediate in which the phosphate is ADP-ribosylated by NAD followed by a presumed transesterification to release the RNA and generate ADP-ribose 1''-2''-cyclic phosphate (APPR&gt;P). May function as an ADP-ribosylase. The polypeptide is Probable RNA 2'-phosphotransferase (Clostridium perfringens (strain SM101 / Type A)).